The chain runs to 224 residues: uncharacterized protein (224 aa).

Positions 44 to 139 (TSPPIVPLPT…PSPPPSPSPL (96 aa)) are enriched in pro residues. Residues 44–145 (TSPPIVPLPT…PSPLGEPMYY (102 aa)) form a disordered region.

This is an uncharacterized protein from Lepidoptera (butterflies and moths).